Consider the following 357-residue polypeptide: S-adenosylmethionine decarboxylase proenzyme (357 aa).

Residues Glu-11 and Glu-14 contribute to the active site. The active-site Schiff-base intermediate with substrate; via pyruvic acid is the Ser-71. Ser-71 bears the Pyruvic acid (Ser); by autocatalysis mark. Catalysis depends on Cys-85, which acts as the Proton donor; for catalytic activity. Residues Ser-234 and His-247 each act as proton acceptor; for processing activity in the active site.

This sequence belongs to the eukaryotic AdoMetDC family. It depends on pyruvate as a cofactor. Post-translationally, is synthesized initially as an inactive proenzyme. Formation of the active enzyme involves a self-maturation process in which the active site pyruvoyl group is generated from an internal serine residue via an autocatalytic post-translational modification. Two non-identical subunits are generated from the proenzyme in this reaction, and the pyruvate is formed at the N-terminus of the alpha chain, which is derived from the carboxyl end of the proenzyme. The post-translation cleavage follows an unusual pathway, termed non-hydrolytic serinolysis, in which the side chain hydroxyl group of the serine supplies its oxygen atom to form the C-terminus of the beta chain, while the remainder of the serine residue undergoes an oxidative deamination to produce ammonia and the pyruvoyl group blocking the N-terminus of the alpha chain.

It carries out the reaction S-adenosyl-L-methionine + H(+) = S-adenosyl 3-(methylsulfanyl)propylamine + CO2. Its pathway is amine and polyamine biosynthesis; S-adenosylmethioninamine biosynthesis; S-adenosylmethioninamine from S-adenosyl-L-methionine: step 1/1. The polypeptide is S-adenosylmethionine decarboxylase proenzyme (SAMDC) (Catharanthus roseus (Madagascar periwinkle)).